The chain runs to 514 residues: Bifunctional purine biosynthesis protein PurH (514 aa).

The 146-residue stretch at 1–146 (MARLALLSVS…KNFAHLAVLC (146 aa)) folds into the MGS-like domain.

This sequence belongs to the PurH family.

The enzyme catalyses (6R)-10-formyltetrahydrofolate + 5-amino-1-(5-phospho-beta-D-ribosyl)imidazole-4-carboxamide = 5-formamido-1-(5-phospho-D-ribosyl)imidazole-4-carboxamide + (6S)-5,6,7,8-tetrahydrofolate. It carries out the reaction IMP + H2O = 5-formamido-1-(5-phospho-D-ribosyl)imidazole-4-carboxamide. It functions in the pathway purine metabolism; IMP biosynthesis via de novo pathway; 5-formamido-1-(5-phospho-D-ribosyl)imidazole-4-carboxamide from 5-amino-1-(5-phospho-D-ribosyl)imidazole-4-carboxamide (10-formyl THF route): step 1/1. It participates in purine metabolism; IMP biosynthesis via de novo pathway; IMP from 5-formamido-1-(5-phospho-D-ribosyl)imidazole-4-carboxamide: step 1/1. The polypeptide is Bifunctional purine biosynthesis protein PurH (Nostoc punctiforme (strain ATCC 29133 / PCC 73102)).